The primary structure comprises 204 residues: Ribonuclease HII (204 aa).

The RNase H type-2 domain occupies 13 to 204 (GPVAGCDEAG…VRRAARLHSS (192 aa)). Asp19, Glu20, and Asp113 together coordinate a divalent metal cation.

It belongs to the RNase HII family. Requires Mn(2+) as cofactor. The cofactor is Mg(2+).

The protein localises to the cytoplasm. It catalyses the reaction Endonucleolytic cleavage to 5'-phosphomonoester.. Its function is as follows. Endonuclease that specifically degrades the RNA of RNA-DNA hybrids. The sequence is that of Ribonuclease HII from Cutibacterium acnes (strain DSM 16379 / KPA171202) (Propionibacterium acnes).